We begin with the raw amino-acid sequence, 338 residues long: Cap-specific mRNA (nucleoside-2'-O-)-methyltransferase (338 aa).

Tyr-22 serves as a coordination point for mRNA. Residues Gln-39, Tyr-66, Gly-68, Gly-72, Asp-95, Arg-97, Val-116, and Asp-138 each contribute to the S-adenosyl-L-methionine site. The tract at residues 169–249 (PAASSLKWRC…NKIIRNRIII (81 aa)) is binding to NPH-I. The interval 169–333 (PAASSLKWRC…NTKKSVRGNK (165 aa)) is binding to Rap94. Residue Lys-175 is the For methyltransferase activity of the active site. Residues 177–180 (RCPF), Asp-182, 205–207 (SAE), and Glu-233 each bind mRNA. The tract at residues 305–338 (HHEPTQRKVPSKNTMLKSRNTKKSVRGNKQGRRT) is disordered. Residues 323–338 (RNTKKSVRGNKQGRRT) are compositionally biased toward basic residues.

It belongs to the class I-like SAM-binding methyltransferase superfamily. Poxvirus/kinetoplastid 2'-O-MTase family. In terms of assembly, interacts with poly(A) polymerase catalytic subunit OPG063. Interacts with OPG109 and OPG123; these interactions might help linking transcription to capping and polyadenylation.

It is found in the virion. The enzyme catalyses a 5'-end (N(7)-methyl 5'-triphosphoguanosine)-ribonucleoside in mRNA + S-adenosyl-L-methionine = a 5'-end (N(7)-methyl 5'-triphosphoguanosine)-(2'-O-methyl-ribonucleoside) in mRNA + S-adenosyl-L-homocysteine + H(+). Displays methyltransferase, positive regulation of the poly(A) polymerase and transcription elongation activities. Involved in the modification of both mRNA ends and in intermediate and late gene positive transcription elongation. At the mRNAs 5' end, methylates the ribose 2' OH group of the first transcribed nucleotide, thereby producing a 2'-O-methylpurine cap. At the 3' end, functions as a processivity factor which stimulates the activity of the viral poly(A) polymerase OPG063 that creates mRNA's poly(A) tail. In the presence of OPG102, OPG063 does not dissociate from the RNA allowing tail elongation to around 250 adenylates. This chain is Cap-specific mRNA (nucleoside-2'-O-)-methyltransferase (OPG102), found in Oryctolagus cuniculus (Rabbit).